A 262-amino-acid polypeptide reads, in one-letter code: MRYQNMFETLKKHEKMAFIPFVTLGDPNYELSFEIIKTLIISGVSALELGLAFSDPVADGITIQASHLRALKHASMAKNFQLLKKIRDYNHNIPIGLLAYANLIFSYGVDGFYAQAKECGIDSVLIADMPLIEKELVIKSAQKHQIKQIFIASPNASSKDLEQVATHSQGYIYALARSGVTGASRILENDSSAIIKTLKAFSPTPALLGFGISKKEHITNAKGMGADGVICGSALVKIIEENLNNENAMLEKIKGFIGGMIF.

Residues E48 and D59 each act as proton acceptor in the active site.

This sequence belongs to the TrpA family. As to quaternary structure, tetramer of two alpha and two beta chains.

The catalysed reaction is (1S,2R)-1-C-(indol-3-yl)glycerol 3-phosphate + L-serine = D-glyceraldehyde 3-phosphate + L-tryptophan + H2O. It functions in the pathway amino-acid biosynthesis; L-tryptophan biosynthesis; L-tryptophan from chorismate: step 5/5. The alpha subunit is responsible for the aldol cleavage of indoleglycerol phosphate to indole and glyceraldehyde 3-phosphate. The sequence is that of Tryptophan synthase alpha chain from Helicobacter pylori (strain ATCC 700392 / 26695) (Campylobacter pylori).